We begin with the raw amino-acid sequence, 309 residues long: Probable (S)-ureidoglycine aminohydrolase (309 aa).

Positions 1-22 (MMLPRLLLLVVASALPLASVAA) are cleaved as a signal peptide. Mn(2+) contacts are provided by Glu245, His247, His251, and Gln285. Glu245 lines the substrate pocket. Gln285, Tyr297, and Lys301 together coordinate substrate.

Belongs to the UGHY family. Homooctamer. Requires Mn(2+) as cofactor.

Its subcellular location is the endoplasmic reticulum. It catalyses the reaction (S)-2-ureidoglycine + H2O = (S)-ureidoglycolate + NH4(+). Functionally, involved in the catabolism of purine nucleotides. The sequential activity of AAH, UGLYAH and UAH allows a complete purine breakdown without the intermediate generation of urea. The sequence is that of Probable (S)-ureidoglycine aminohydrolase (UGLYAH) from Oryza sativa subsp. japonica (Rice).